Consider the following 79-residue polypeptide: Cell division protein ZapB (79 aa).

Residues F6 to E78 are a coiled coil.

Belongs to the ZapB family. Homodimer. The ends of the coiled-coil dimer bind to each other, forming polymers. Interacts with FtsZ.

It is found in the cytoplasm. In terms of biological role, non-essential, abundant cell division factor that is required for proper Z-ring formation. It is recruited early to the divisome by direct interaction with FtsZ, stimulating Z-ring assembly and thereby promoting cell division earlier in the cell cycle. Its recruitment to the Z-ring requires functional FtsA or ZipA. This Yersinia pseudotuberculosis serotype O:1b (strain IP 31758) protein is Cell division protein ZapB.